The primary structure comprises 329 residues: BTB/POZ domain-containing adapter for CUL3-mediated RhoA degradation protein 1 (329 aa).

The span at 1-22 (MSAEASGPAAAAAPSLEAPKPS) shows a compositional bias: low complexity. The segment at 1-31 (MSAEASGPAAAAAPSLEAPKPSGLEPGPAAY) is disordered. Residues 41–109 (KYVKLNVGGS…LRDGSVPLPE (69 aa)) form the BTB domain. The tract at residues 282–303 (ATGGAAGAGGAGRGEDEENREH) is disordered.

Belongs to the BACURD family. Homotetramer; forms a two-fold symmetric tetramer in solution. Interacts with CUL3; interaction is direct and forms a 5:5 heterodecamer. Component of the BCR(KCTD13) E3 ubiquitin ligase complex, at least composed of CUL3, KCTD13/BACURD1 and RBX1. Interacts with RHOA; with a preference for RhoA-GDP. Interacts with POLD2 and PCNA. Interacts with SPRTN. Expressed in a wide variety of tissues.

Its subcellular location is the nucleus. Its pathway is protein modification; protein ubiquitination. Functionally, substrate-specific adapter of a BCR (BTB-CUL3-RBX1) E3 ubiquitin-protein ligase complex required for synaptic transmission. The BCR(KCTD13) E3 ubiquitin ligase complex mediates the ubiquitination of RHOA, leading to its degradation by the proteasome Degradation of RHOA regulates the actin cytoskeleton and promotes synaptic transmission. This is BTB/POZ domain-containing adapter for CUL3-mediated RhoA degradation protein 1 (KCTD13) from Homo sapiens (Human).